The chain runs to 503 residues: Transcription termination/antitermination protein NusA (503 aa).

Residues 139–203 (GEIINGIVKR…KGPQIFLSRV (65 aa)) form the S1 motif domain. A KH domain is found at 308-378 (RHKVEVVVSQ…LDVEEVIGQL (71 aa)).

Belongs to the NusA family. Monomer. Binds directly to the core enzyme of the DNA-dependent RNA polymerase and to nascent RNA.

The protein resides in the cytoplasm. Participates in both transcription termination and antitermination. In Rickettsia conorii (strain ATCC VR-613 / Malish 7), this protein is Transcription termination/antitermination protein NusA.